Here is a 153-residue protein sequence, read N- to C-terminus: Interleukin-2 (153 aa).

The N-terminal stretch at 1–20 (MYKVQLLSCIALTLALLTSS) is a signal peptide. T23 carries an O-linked (GalNAc...) threonine glycan. A disulfide bridge links C78 with C125. The N-linked (GlcNAc...) asparagine glycan is linked to N111.

This sequence belongs to the IL-2 family.

The protein localises to the secreted. Functionally, cytokine produced by activated CD4-positive helper T-cells and to a lesser extend activated CD8-positive T-cells and natural killer (NK) cells that plays pivotal roles in the immune response and tolerance. Binds to a receptor complex composed of either the high-affinity trimeric IL-2R (IL2RA/CD25, IL2RB/CD122 and IL2RG/CD132) or the low-affinity dimeric IL-2R (IL2RB and IL2RG). Interaction with the receptor leads to oligomerization and conformation changes in the IL-2R subunits resulting in downstream signaling starting with phosphorylation of JAK1 and JAK3. In turn, JAK1 and JAK3 phosphorylate the receptor to form a docking site leading to the phosphorylation of several substrates including STAT5. This process leads to activation of several pathways including STAT, phosphoinositide-3-kinase/PI3K and mitogen-activated protein kinase/MAPK pathways. Functions as a T-cell growth factor and can increase NK-cell cytolytic activity as well. Promotes strong proliferation of activated B-cells and subsequently immunoglobulin production. Plays a pivotal role in regulating the adaptive immune system by controlling the survival and proliferation of regulatory T-cells, which are required for the maintenance of immune tolerance. Moreover, participates in the differentiation and homeostasis of effector T-cell subsets, including Th1, Th2, Th17 as well as memory CD8-positive T-cells. This chain is Interleukin-2 (IL2), found in Oryctolagus cuniculus (Rabbit).